The following is a 78-amino-acid chain: Large ribosomal subunit protein bL28 (78 aa).

Belongs to the bacterial ribosomal protein bL28 family.

This chain is Large ribosomal subunit protein bL28, found in Parasynechococcus marenigrum (strain WH8102).